A 296-amino-acid polypeptide reads, in one-letter code: CTD kinase subunit gamma (296 aa).

A disordered region spans residues 25–44 (RDSITSSSTTTPPSSQQKLN). Low complexity predominate over residues 29–39 (TSSSTTTPPSS). Phosphothreonine is present on Thr35.

Belongs to the CTK3 family. CTDK-I consists of three subunits, CTK1, CTK2 and CTK3 (also called alpha, beta and gamma). Interacts with CTK1. Heterodimerization with CTK2 is required to protect this subunit from degradation. Ubiquitinated. Ubiquitination leads to degradation by the 26S proteasome pathway.

It is found in the nucleus. The protein localises to the nucleolus. The protein resides in the cytoplasm. Its function is as follows. Gamma subunit of the CTDK-I complex, which hyperphosphorylates the C-terminal heptapeptide repeat domain (CTD) of the largest RNA polymerase II subunit. CTDK-I phosphorylates 'Ser-5' if the CTD substrate is not phosphorylated at 'Ser-5', but will phosphorylate 'Ser-2' of a CTD substrate if 'Ser-5' is already phosphorylated. CTDK-I is also more reactive toward substrates that are prephosphorylated at 'Ser-2' or 'Ser-5' compared with an unphosphorylated CTD substrate, therefore efficiently creating doubly phosphorylated CTD repeats. Involved in RNA polymerase I transcription and RNA polymerase II transcriptional elongation, and as part of the CTDK-I complex, pre-mRNA 3'-end processing and SET2 mediated H3K36 methylation. Together with CTK2, required for CTK1 CTD kinase activation. Required for DNA damage induced transcription. Involved in the adaptation to alternative carbon sources, including galactose, glycerol and ethanol, but not raffinose. Required for the integrity of the rDNA locus. In Saccharomyces cerevisiae (strain ATCC 204508 / S288c) (Baker's yeast), this protein is CTD kinase subunit gamma (CTK3).